A 265-amino-acid chain; its full sequence is Mlc titration factor A (265 aa).

Zn(2+) is bound by residues His-111, His-148, His-152, and Glu-211.

This sequence belongs to the MtfA family. As to quaternary structure, interacts with Mlc. The cofactor is Zn(2+).

The protein localises to the cytoplasm. Involved in the modulation of the activity of the glucose-phosphotransferase system (glucose-PTS). Interacts with the transcriptional repressor Mlc, preventing its interaction with DNA and leading to the modulation of expression of genes regulated by Mlc, including ptsG, which encodes the PTS system glucose-specific EIICB component. Functionally, shows zinc-dependent metallopeptidase activity. This Salmonella choleraesuis (strain SC-B67) protein is Mlc titration factor A.